A 235-amino-acid polypeptide reads, in one-letter code: MGSTESSEGRRVSFGVDEEERVRVLQGVRLSENVVNRMKEPSSPPPAPTSSTFGLQDGNLRAPHKESTLPRSGSSGGQQPSGMKEGVKRYEQEHAAIQDKLFQVAKREREAATKHSKASLPTGEGSISHEEQKSVRLARELESREAELRRRDTFYKEQLERIERKNAEMYKLSSEQFHEAASKMESTIKPRRVEPVCSGLQAQILHCYRDRPHEVLLCSDLVKAYQRCVSAAHKG.

The N-myristoyl glycine moiety is linked to residue glycine 2. Residues serine 13 and serine 31 each carry the phosphoserine modification. Disordered stretches follow at residues 31-90 (SENV…VKRY) and 106-132 (KREREAATKHSKASLPTGEGSISHEEQ). The stretch at 129–176 (HEEQKSVRLARELESREAELRRRDTFYKEQLERIERKNAEMYKLSSEQ) forms a coiled coil. Residues 194-235 (EPVCSGLQAQILHCYRDRPHEVLLCSDLVKAYQRCVSAAHKG) enclose the CHCH domain. 2 short sequence motifs (cx9C motif) span residues 197-207 (CSGLQAQILHC) and 218-228 (CSDLVKAYQRC). Disulfide bonds link cysteine 197/cysteine 228 and cysteine 207/cysteine 218.

It belongs to the MICOS complex subunit Mic19 family. Metazoan Mic25 subfamily. As to quaternary structure, component of the mitochondrial contact site and cristae organizing system (MICOS) complex, composed of at least MICOS10/MIC10, CHCHD3/MIC19, CHCHD6/MIC25, APOOL/MIC27, IMMT/MIC60, APOO/MIC23/MIC26 and MICOS13/MIC13. This complex was also known under the names MINOS or MitOS complex. The MICOS complex associates with mitochondrial outer membrane proteins SAMM50, MTX1 and MTX2 (together described as components of the mitochondrial outer membrane sorting assembly machinery (SAM) complex) and DNAJC11, mitochondrial inner membrane protein TMEM11 and with HSPA9. The MICOS and SAM complexes together with DNAJC11 are part of a large protein complex spanning both membranes termed the mitochondrial intermembrane space bridging (MIB) complex. Interacts with DISC1. Interacts with DISC1. Interacts with IMMT/MIC60. In terms of assembly, (Microbial infection) Interacts with human cytomegalovirus protein UL37 isoform vMIA; this interaction rewires mitochondria by engaging the conserved MICOS complex.

It is found in the mitochondrion inner membrane. Its subcellular location is the mitochondrion. In terms of biological role, component of the MICOS complex, a large protein complex of the mitochondrial inner membrane that plays crucial roles in the maintenance of crista junctions, inner membrane architecture, and formation of contact sites to the outer membrane. The polypeptide is MICOS complex subunit MIC25 (CHCHD6) (Homo sapiens (Human)).